The following is a 205-amino-acid chain: Small ribosomal subunit protein uS3c (205 aa).

Positions 37–106 (IRQLLRDYVL…TWRISLVEVS (70 aa)) constitute a KH type-2 domain.

The protein belongs to the universal ribosomal protein uS3 family. In terms of assembly, part of the 30S ribosomal subunit.

Its subcellular location is the plastid. It localises to the chloroplast. This chain is Small ribosomal subunit protein uS3c (rps3), found in Cyanidioschyzon merolae (strain NIES-3377 / 10D) (Unicellular red alga).